The primary structure comprises 150 residues: UPF0178 protein AZOSEA36080 (150 aa).

Belongs to the UPF0178 family.

This Aromatoleum aromaticum (strain DSM 19018 / LMG 30748 / EbN1) (Azoarcus sp. (strain EbN1)) protein is UPF0178 protein AZOSEA36080.